We begin with the raw amino-acid sequence, 125 residues long: Glycine cleavage system H protein (125 aa).

The Lipoyl-binding domain maps to 22–104 (VATVGITIHA…EGEGWLFKLK (83 aa)). Position 63 is an N6-lipoyllysine (lysine 63).

Belongs to the GcvH family. In terms of assembly, the glycine cleavage system is composed of four proteins: P, T, L and H. The cofactor is (R)-lipoate.

Functionally, the glycine cleavage system catalyzes the degradation of glycine. The H protein shuttles the methylamine group of glycine from the P protein to the T protein. The protein is Glycine cleavage system H protein of Brucella abortus (strain 2308).